The following is a 79-amino-acid chain: Short neurotoxin 8 (79 aa).

Positions 1–21 (MKTLLLTLVMVTIMCLDLGYT) are cleaved as a signal peptide. 4 disulfide bridges follow: cysteine 24–cysteine 41, cysteine 34–cysteine 59, cysteine 63–cysteine 71, and cysteine 72–cysteine 77.

It belongs to the three-finger toxin family. Short-chain subfamily. Type III alpha-neurotoxin sub-subfamily. As to expression, expressed by the venom gland.

It localises to the secreted. Its function is as follows. Binds with high affinity to muscle nicotinic acetylcholine receptor (nAChR) and hinders acetylcholine binding to the receptor, thereby impairing neuromuscular transmission. Causes muscle paralysis, spasms and increased respiration. The chain is Short neurotoxin 8 from Pseudonaja textilis (Eastern brown snake).